The chain runs to 455 residues: MPKSAVSLFAILLLAASVITACSPQTRPDAMSVVQERQVLRVGTLINPTSYYFDHDREQGFEYDLAKRFADRLGVELEMVPRFDVNDLFTMLRRGEVDIVAAGLDRTSTRAQLFRFSPPYDIISQKVVFKQGSRQRPRDLQQITDGEIVVVEGSSHHEFLKSLGDSIPTLKWRATRDHDAVELLQMVISGEVDYTITDSTALDIQRRFHPDLSVAFTVKHDQDIAWALPQGKDDSLFAAVIEYFGEIRSSGRLAHIKEQHFGHVKQFNYVTTSLFIEAVEQVLPGYIETFKEHSGSLDWRLLAAISYQESLWNPRAVSPTGVRGMMMLTLPTAKAMGVKSRLNAEQSIRGGARYLERMLNRVPARIPQPDRTWFAIAAYNIGFGHLEDARIITERQGGNPDRWVDVKKRLPLLRQKQFYRHTRYGFARGDEPVTYVGNIRRFYDTLKYLDEQGRL.

The signal sequence occupies residues 1 to 21 (MPKSAVSLFAILLLAASVITA). Residues 22–264 (CSPQTRPDAM…HIKEQHFGHV (243 aa)) are non-LT domain. An LT domain region spans residues 265–455 (KQFNYVTTSL…LKYLDEQGRL (191 aa)). Glu309 is a catalytic residue.

In the N-terminal section; belongs to the bacterial solute-binding protein 3 family. This sequence in the C-terminal section; belongs to the transglycosylase Slt family.

It is found in the cell outer membrane. It carries out the reaction Exolytic cleavage of the (1-&gt;4)-beta-glycosidic linkage between N-acetylmuramic acid (MurNAc) and N-acetylglucosamine (GlcNAc) residues in peptidoglycan, from either the reducing or the non-reducing ends of the peptidoglycan chains, with concomitant formation of a 1,6-anhydrobond in the MurNAc residue.. In terms of biological role, murein-degrading enzyme that degrades murein glycan strands and insoluble, high-molecular weight murein sacculi, with the concomitant formation of a 1,6-anhydromuramoyl product. Lytic transglycosylases (LTs) play an integral role in the metabolism of the peptidoglycan (PG) sacculus. Their lytic action creates space within the PG sacculus to allow for its expansion as well as for the insertion of various structures such as secretion systems and flagella. This is Membrane-bound lytic murein transglycosylase F from Idiomarina loihiensis (strain ATCC BAA-735 / DSM 15497 / L2-TR).